We begin with the raw amino-acid sequence, 424 residues long: Protein-glutamate methylesterase/protein-glutamine glutaminase (424 aa).

Residues 6–123 (RVLVVDDSAF…SLDDFTRQLT (118 aa)) form the Response regulatory domain. Residue Asp-57 is modified to 4-aspartylphosphate. Residues 177–210 (SRLSPGRSPGGKEGVAGAVSAGSTRGEAIRPGKG) form a disordered region. Residues 229–423 (RRPGIEVVAI…PAIVALVTGA (195 aa)) form the CheB-type methylesterase domain. Active-site residues include Ser-241, His-268, and Asp-365.

This sequence belongs to the CheB family. Phosphorylated by CheA. Phosphorylation of the N-terminal regulatory domain activates the methylesterase activity.

Its subcellular location is the cytoplasm. The enzyme catalyses [protein]-L-glutamate 5-O-methyl ester + H2O = L-glutamyl-[protein] + methanol + H(+). It catalyses the reaction L-glutaminyl-[protein] + H2O = L-glutamyl-[protein] + NH4(+). In terms of biological role, involved in chemotaxis. Part of a chemotaxis signal transduction system that modulates chemotaxis in response to various stimuli. Catalyzes the demethylation of specific methylglutamate residues introduced into the chemoreceptors (methyl-accepting chemotaxis proteins or MCP) by CheR. Also mediates the irreversible deamidation of specific glutamine residues to glutamic acid. In Moorella thermoacetica (strain ATCC 39073 / JCM 9320), this protein is Protein-glutamate methylesterase/protein-glutamine glutaminase.